A 138-amino-acid chain; its full sequence is Acidic phospholipase A2 jerdoxin (138 aa).

The N-terminal stretch at 1 to 16 (MRTLWIMAVLLVGVEG) is a signal peptide. Cystine bridges form between Cys42/Cys131, Cys44/Cys60, Cys59/Cys111, Cys65/Cys138, Cys66/Cys104, Cys73/Cys97, and Cys91/Cys102. Tyr43, Gly45, and Gly47 together coordinate Ca(2+). His63 is an active-site residue. Residue Asp64 coordinates Ca(2+). The active site involves Asp105.

This sequence belongs to the phospholipase A2 family. Group II subfamily. D49 sub-subfamily. In terms of assembly, monomer. Requires Ca(2+) as cofactor. As to expression, expressed by the venom gland.

It localises to the secreted. It catalyses the reaction a 1,2-diacyl-sn-glycero-3-phosphocholine + H2O = a 1-acyl-sn-glycero-3-phosphocholine + a fatty acid + H(+). Functionally, snake venom phospholipase A2 (PLA2) that displays edema-inducing activities, exhibits indirect hemolytic activity, and inhibits ADP-induced platelet aggregation. PLA2 catalyzes the calcium-dependent hydrolysis of the 2-acyl groups in 3-sn-phosphoglycerides. The protein is Acidic phospholipase A2 jerdoxin of Protobothrops jerdonii (Jerdon's pitviper).